The following is a 635-amino-acid chain: Threonine--tRNA ligase (635 aa).

In terms of domain architecture, TGS spans 1–61; it reads MVSIRLPDGS…DRDASLAIVT (61 aa). Positions 242 to 533 are catalytic; sequence DHRKLGKQLD…LIEHHAGAMP (292 aa). Zn(2+) is bound by residues Cys-333, His-384, and His-510.

Belongs to the class-II aminoacyl-tRNA synthetase family. As to quaternary structure, homodimer. Zn(2+) serves as cofactor.

Its subcellular location is the cytoplasm. The enzyme catalyses tRNA(Thr) + L-threonine + ATP = L-threonyl-tRNA(Thr) + AMP + diphosphate + H(+). Its function is as follows. Catalyzes the attachment of threonine to tRNA(Thr) in a two-step reaction: L-threonine is first activated by ATP to form Thr-AMP and then transferred to the acceptor end of tRNA(Thr). Also edits incorrectly charged L-seryl-tRNA(Thr). The chain is Threonine--tRNA ligase from Burkholderia pseudomallei (strain 1106a).